Consider the following 1123-residue polypeptide: Ubiquitin carboxyl-terminal hydrolase 43 (1123 aa).

Residues 1-102 (MDLGPGDAAG…DGARPPGAQG (102 aa)) are disordered. Positions 17 to 28 (RPRRRRSLRRLF) are enriched in basic residues. The span at 29–39 (SRFLLALGSRS) shows a compositional bias: low complexity. Residues 101-710 (QGLKNHGNTC…GAYILFYQKR (610 aa)) form the USP domain. The active-site Nucleophile is C110. Residues 202–221 (EGSSRGPVSEKLPPEATKTS) form a disordered region. H668 acts as the Proton acceptor in catalysis. Residue R746 is modified to Asymmetric dimethylarginine. Disordered regions lie at residues 795-826 (ISMK…EKPP), 854-886 (TGTA…IERG), 959-1049 (FQMG…RIPE), and 1068-1099 (SSLR…QASY). Residue S969 is modified to Phosphoserine. Over residues 979-990 (KDSRRGTSELDR) the composition is skewed to basic and acidic residues. A compositionally biased stretch (low complexity) spans 1016 to 1027 (VSPQVPPVSLVS). S1041 is modified (phosphoserine).

This sequence belongs to the peptidase C19 family. In terms of tissue distribution, expressed in brain, aorta and lung at low levels.

The enzyme catalyses Thiol-dependent hydrolysis of ester, thioester, amide, peptide and isopeptide bonds formed by the C-terminal Gly of ubiquitin (a 76-residue protein attached to proteins as an intracellular targeting signal).. In terms of biological role, may recognize and hydrolyze the peptide bond at the C-terminal Gly of ubiquitin. Involved in the processing of poly-ubiquitin precursors as well as that of ubiquitinated proteins. The sequence is that of Ubiquitin carboxyl-terminal hydrolase 43 (USP43) from Homo sapiens (Human).